The chain runs to 445 residues: Trigger factor (445 aa).

Residues 172 to 257 (GDQVVIDFVG…VKSVNWAHMP (86 aa)) form the PPIase FKBP-type domain.

It belongs to the FKBP-type PPIase family. Tig subfamily.

It localises to the cytoplasm. It carries out the reaction [protein]-peptidylproline (omega=180) = [protein]-peptidylproline (omega=0). Its function is as follows. Involved in protein export. Acts as a chaperone by maintaining the newly synthesized protein in an open conformation. Functions as a peptidyl-prolyl cis-trans isomerase. The chain is Trigger factor from Polynucleobacter asymbioticus (strain DSM 18221 / CIP 109841 / QLW-P1DMWA-1) (Polynucleobacter necessarius subsp. asymbioticus).